The sequence spans 301 residues: LHMIHLHWYQYPPMNPMMYPLLLIFMLFTGILCLAGNFVTIWVFMNTKSLRTPANLLVVNLAMSDFLMMFTMFPPMMVTCYYHTWTLGPTFCQVYAFLGNLCGCASIWTMVFITFDRYNVIVKGVAGEPLSTKKASLWILSVWVLSTAWCIAPFFGWNHYVPEGNLTGCGTDYLSEDILSRSYLYIYSTWVYFLPLAITIYCYVFIIKAVAAHEKGMRDQAKKMGIKSLRNEEAQKTSAECRLAKNAMTTVALWFIAWTPCLLINWVGMFARSYLSPVYTIWGYVFAKANAVYNPIVYAIS.

Over 1-18 (LHMIHLHWYQYPPMNPMM) the chain is Extracellular. Residues 19–43 (YPLLLIFMLFTGILCLAGNFVTIWV) form a helical membrane-spanning segment. The Cytoplasmic portion of the chain corresponds to 44 to 55 (FMNTKSLRTPAN). Residues 56–78 (LLVVNLAMSDFLMMFTMFPPMMV) traverse the membrane as a helical segment. Over 79-92 (TCYYHTWTLGPTFC) the chain is Extracellular. Cysteine 92 and cysteine 169 form a disulfide bridge. The chain crosses the membrane as a helical span at residues 93-115 (QVYAFLGNLCGCASIWTMVFITF). The 'Ionic lock' involved in activated form stabilization motif lies at 116–118 (DRY). The Cytoplasmic segment spans residues 116–134 (DRYNVIVKGVAGEPLSTKK). The helical transmembrane segment at 135-155 (ASLWILSVWVLSTAWCIAPFF) threads the bilayer. The Extracellular portion of the chain corresponds to 156–182 (GWNHYVPEGNLTGCGTDYLSEDILSRS). N-linked (GlcNAc...) asparagine glycosylation occurs at asparagine 165. The chain crosses the membrane as a helical span at residues 183–204 (YLYIYSTWVYFLPLAITIYCYV). Over 205–245 (FIIKAVAAHEKGMRDQAKKMGIKSLRNEEAQKTSAECRLAK) the chain is Cytoplasmic. The chain crosses the membrane as a helical span at residues 246–267 (NAMTTVALWFIAWTPCLLINWV). Residues 268 to 278 (GMFARSYLSPV) are Extracellular-facing. A helical membrane pass occupies residues 279-300 (YTIWGYVFAKANAVYNPIVYAI). At lysine 288 the chain carries N6-(retinylidene)lysine.

The protein belongs to the G-protein coupled receptor 1 family. Opsin subfamily. As to quaternary structure, homodimer. Interacts with GNAQ. Post-translationally, contains one covalently linked retinal chromophore.

It is found in the cell projection. The protein localises to the rhabdomere membrane. In terms of biological role, photoreceptor required for image-forming vision at low light intensity. Can use both retinal and 3-dehydroretinal as visual pigment. Light-induced isomerization of 11-cis to all-trans retinal triggers a conformational change that activates signaling via G-proteins. Signaling via GNAQ probably mediates the activation of phospholipase C. This chain is Rhodopsin (RHO), found in Cambarus hubrichti (Salem cave crayfish).